Consider the following 365-residue polypeptide: Phospho-N-acetylmuramoyl-pentapeptide-transferase (365 aa).

Transmembrane regions (helical) follow at residues 47–67, 92–112, 114–134, 153–173, 180–200, 215–235, 239–259, 281–301, and 344–364; these read LLAL…VVPL, PTMG…ILAG, SPLV…GWLD, LCLQ…QQGW, ITLP…LAVF, LDGL…LWLA, PAIA…LLHN, AIAI…LFVL, and TQVV…CWLL.

The protein belongs to the glycosyltransferase 4 family. MraY subfamily. Mg(2+) serves as cofactor.

Its subcellular location is the cell inner membrane. It carries out the reaction UDP-N-acetyl-alpha-D-muramoyl-L-alanyl-gamma-D-glutamyl-meso-2,6-diaminopimeloyl-D-alanyl-D-alanine + di-trans,octa-cis-undecaprenyl phosphate = di-trans,octa-cis-undecaprenyl diphospho-N-acetyl-alpha-D-muramoyl-L-alanyl-D-glutamyl-meso-2,6-diaminopimeloyl-D-alanyl-D-alanine + UMP. The protein operates within cell wall biogenesis; peptidoglycan biosynthesis. Functionally, catalyzes the initial step of the lipid cycle reactions in the biosynthesis of the cell wall peptidoglycan: transfers peptidoglycan precursor phospho-MurNAc-pentapeptide from UDP-MurNAc-pentapeptide onto the lipid carrier undecaprenyl phosphate, yielding undecaprenyl-pyrophosphoryl-MurNAc-pentapeptide, known as lipid I. This Synechococcus elongatus (strain ATCC 33912 / PCC 7942 / FACHB-805) (Anacystis nidulans R2) protein is Phospho-N-acetylmuramoyl-pentapeptide-transferase.